We begin with the raw amino-acid sequence, 386 residues long: Formate-dependent phosphoribosylglycinamide formyltransferase (386 aa).

N(1)-(5-phospho-beta-D-ribosyl)glycinamide is bound by residues 10 to 11 (EL) and Glu70. Residues Arg102, Lys143, 148–153 (SSGKGQ), 183–186 (EAFV), and Glu191 contribute to the ATP site. One can recognise an ATP-grasp domain in the interval 107-298 (DLAAKELGLK…EFELHLRAIL (192 aa)). Positions 256 and 268 each coordinate Mg(2+). N(1)-(5-phospho-beta-D-ribosyl)glycinamide-binding positions include Asp275, Lys346, and 353–354 (RR).

Belongs to the PurK/PurT family. In terms of assembly, homodimer.

The catalysed reaction is N(1)-(5-phospho-beta-D-ribosyl)glycinamide + formate + ATP = N(2)-formyl-N(1)-(5-phospho-beta-D-ribosyl)glycinamide + ADP + phosphate + H(+). It participates in purine metabolism; IMP biosynthesis via de novo pathway; N(2)-formyl-N(1)-(5-phospho-D-ribosyl)glycinamide from N(1)-(5-phospho-D-ribosyl)glycinamide (formate route): step 1/1. Functionally, involved in the de novo purine biosynthesis. Catalyzes the transfer of formate to 5-phospho-ribosyl-glycinamide (GAR), producing 5-phospho-ribosyl-N-formylglycinamide (FGAR). Formate is provided by PurU via hydrolysis of 10-formyl-tetrahydrofolate. This Flavobacterium psychrophilum (strain ATCC 49511 / DSM 21280 / CIP 103535 / JIP02/86) protein is Formate-dependent phosphoribosylglycinamide formyltransferase.